The chain runs to 455 residues: GTPase Der (455 aa).

2 consecutive EngA-type G domains span residues 4 to 174 (PIVA…PAGQ) and 183 to 358 (LKIA…SERN). Residues 10 to 17 (GRPNVGKS), 57 to 61 (DTAGL), 126 to 129 (NKAD), 189 to 196 (GRPNVGKS), 236 to 240 (DTAGI), and 301 to 304 (NKWD) each bind GTP. Positions 359-444 (KRVSTSDINN…PIILVFKGRE (86 aa)) constitute a KH-like domain.

It belongs to the TRAFAC class TrmE-Era-EngA-EngB-Septin-like GTPase superfamily. EngA (Der) GTPase family. As to quaternary structure, associates with the 50S ribosomal subunit.

In terms of biological role, GTPase that plays an essential role in the late steps of ribosome biogenesis. In Herpetosiphon aurantiacus (strain ATCC 23779 / DSM 785 / 114-95), this protein is GTPase Der.